A 432-amino-acid chain; its full sequence is FMRFamide peptide receptor frpr-18 (432 aa).

Over 1 to 8 the chain is Extracellular; the sequence is MESQQLMA. Residues 9–29 form a helical membrane-spanning segment; the sequence is CAILVIVLVGIFGNSLSFILF. Over 30–42 the chain is Cytoplasmic; that stretch reads SRPHMRSSSVNVL. Residues 43–63 form a helical membrane-spanning segment; sequence LCALSFFDFSLLTLSIPIFVI. At 64–84 the chain is on the extracellular side; sequence PNLDLWANDLSLSTYMAYILK. Residues 85 to 105 traverse the membrane as a helical segment; the sequence is LIYPINLMMQTCSVYIMVMIT. Over 106–128 the chain is Cytoplasmic; the sequence is LERWVAVCRPLQVRVWCTPRKSR. A helical membrane pass occupies residues 129-149; sequence NAILVIIVSAFLYNFVRFFEY. Topologically, residues 150–176 are extracellular; that stretch reads RFVVTESGALYEKWLRDPGKHRWYYVG. Residues 177–197 traverse the membrane as a helical segment; sequence YYTILYIVTHFLVPFSVMAFA. The Cytoplasmic portion of the chain corresponds to 198–225; that stretch reads NGHVIVAMCKLSKTRQMLTRQQQREQST. A helical membrane pass occupies residues 226–246; that stretch reads TVMLLIVTFVFAICNTLPFLL. Residues 247-271 are Extracellular-facing; that stretch reads NVSESIFPTLFQDESTRGLAYWLND. A helical membrane pass occupies residues 272 to 292; the sequence is LSNLLVVLNSGTTFIIYFTFS. Topologically, residues 293-432 are cytoplasmic; it reads EKYRQTLVFI…GEPDSPCQPC (140 aa). 2 disordered regions span residues 328-349 and 388-411; these read ISSE…SSRS and KLPS…GMPE.

This sequence belongs to the G-protein coupled receptor 1 family. In terms of tissue distribution, expressed in a subset of neurons in the head, midbody, and tail, including AIY, ASI, BAG, URA, CAN, I6, PVQ, DVA, RIM, and VC, and in the anal sphincter and intestinal muscles. Expression from the ASI neurons is involved in promoting arousal.

The protein resides in the cell membrane. Functionally, G-protein coupled receptor for flp-2 neuropeptides. May act through the G(q) alpha type of G proteins. Involved in mediating arousal from the sleep-like state called lethargus, which occurs during molting between larval and adult stages, in part by regulating touch sensitivity, and working in concert with neuropeptide pdf-1. The chain is FMRFamide peptide receptor frpr-18 from Caenorhabditis elegans.